Consider the following 357-residue polypeptide: Ribosomal RNA large subunit methyltransferase F (357 aa).

Residues 1-15 are compositionally biased toward polar residues; sequence MPKPPRSTQILSCNA. Residues 1–33 are disordered; sequence MPKPPRSTQILSCNAPNGKPKTQHPSARAKVKR.

It belongs to the methyltransferase superfamily. METTL16/RlmF family.

Its subcellular location is the cytoplasm. The catalysed reaction is adenosine(1618) in 23S rRNA + S-adenosyl-L-methionine = N(6)-methyladenosine(1618) in 23S rRNA + S-adenosyl-L-homocysteine + H(+). Its function is as follows. Specifically methylates the adenine in position 1618 of 23S rRNA. The protein is Ribosomal RNA large subunit methyltransferase F of Shewanella putrefaciens (strain CN-32 / ATCC BAA-453).